The sequence spans 955 residues: Leucine--tRNA ligase (955 aa).

Residues 51–61 carry the 'HIGH' region motif; that stretch reads PYLNGVLHAGH. A 'KMSKS' region motif is present at residues 647 to 651; that stretch reads KLSKS. Residue K650 coordinates ATP.

Belongs to the class-I aminoacyl-tRNA synthetase family.

The protein resides in the cytoplasm. The enzyme catalyses tRNA(Leu) + L-leucine + ATP = L-leucyl-tRNA(Leu) + AMP + diphosphate. In Methanococcus maripaludis (strain DSM 14266 / JCM 13030 / NBRC 101832 / S2 / LL), this protein is Leucine--tRNA ligase.